The sequence spans 116 residues: UPF0342 protein lhv_1666 (116 aa).

This sequence belongs to the UPF0342 family.

This chain is UPF0342 protein lhv_1666, found in Lactobacillus helveticus (strain DPC 4571).